Reading from the N-terminus, the 609-residue chain is Chaperone protein DnaK (609 aa).

Phosphothreonine; by autocatalysis is present on Thr-172. The segment at 578–609 (QAQAQQQAGAGGAAKKDENVVDAEFEEVKDDK) is disordered. The segment covering 597–609 (VVDAEFEEVKDDK) has biased composition (acidic residues).

Belongs to the heat shock protein 70 family.

In terms of biological role, acts as a chaperone. The protein is Chaperone protein DnaK of Geobacillus sp. (strain WCH70).